We begin with the raw amino-acid sequence, 229 residues long: tRNA (guanosine(18)-2'-O)-methyltransferase (229 aa).

S-adenosyl-L-methionine-binding residues include T96, I139, and L148.

It belongs to the class IV-like SAM-binding methyltransferase superfamily. RNA methyltransferase TrmH family.

The catalysed reaction is guanosine(18) in tRNA + S-adenosyl-L-methionine = 2'-O-methylguanosine(18) in tRNA + S-adenosyl-L-homocysteine + H(+). Catalyzes the 2'-O methylation of guanosine at position 18 in tRNA. In Escherichia coli O157:H7, this protein is tRNA (guanosine(18)-2'-O)-methyltransferase.